The chain runs to 729 residues: Phosphoribosylformylglycinamidine synthase subunit PurL (729 aa).

The active site involves histidine 54. 2 residues coordinate ATP: tyrosine 57 and lysine 96. Glutamate 98 contributes to the Mg(2+) binding site. Substrate contacts are provided by residues 99–102 (SHNH) and arginine 121. Histidine 100 (proton acceptor) is an active-site residue. Aspartate 122 is a binding site for Mg(2+). Glutamine 245 is a binding site for substrate. Position 273 (aspartate 273) interacts with Mg(2+). 317-319 (ETQ) lines the substrate pocket. The ATP site is built by aspartate 495 and glycine 532. Residue asparagine 533 coordinates Mg(2+). Serine 535 provides a ligand contact to substrate.

The protein belongs to the FGAMS family. As to quaternary structure, monomer. Part of the FGAM synthase complex composed of 1 PurL, 1 PurQ and 2 PurS subunits.

It localises to the cytoplasm. The enzyme catalyses N(2)-formyl-N(1)-(5-phospho-beta-D-ribosyl)glycinamide + L-glutamine + ATP + H2O = 2-formamido-N(1)-(5-O-phospho-beta-D-ribosyl)acetamidine + L-glutamate + ADP + phosphate + H(+). It participates in purine metabolism; IMP biosynthesis via de novo pathway; 5-amino-1-(5-phospho-D-ribosyl)imidazole from N(2)-formyl-N(1)-(5-phospho-D-ribosyl)glycinamide: step 1/2. Its function is as follows. Part of the phosphoribosylformylglycinamidine synthase complex involved in the purines biosynthetic pathway. Catalyzes the ATP-dependent conversion of formylglycinamide ribonucleotide (FGAR) and glutamine to yield formylglycinamidine ribonucleotide (FGAM) and glutamate. The FGAM synthase complex is composed of three subunits. PurQ produces an ammonia molecule by converting glutamine to glutamate. PurL transfers the ammonia molecule to FGAR to form FGAM in an ATP-dependent manner. PurS interacts with PurQ and PurL and is thought to assist in the transfer of the ammonia molecule from PurQ to PurL. The chain is Phosphoribosylformylglycinamidine synthase subunit PurL from Staphylococcus aureus (strain USA300).